We begin with the raw amino-acid sequence, 403 residues long: S-adenosylmethionine synthase (403 aa).

Histidine 16 provides a ligand contact to ATP. Residue aspartate 18 coordinates Mg(2+). Glutamate 44 is a binding site for K(+). Positions 57 and 100 each coordinate L-methionine. The interval 100–110 (QSNDIAQGVDH) is flexible loop. ATP contacts are provided by residues 167 to 169 (DAK), 238 to 239 (RF), aspartate 247, 253 to 254 (RK), alanine 270, and lysine 274. L-methionine is bound at residue aspartate 247. L-methionine is bound at residue lysine 278.

It belongs to the AdoMet synthase family. Homotetramer; dimer of dimers. Mg(2+) is required as a cofactor. K(+) serves as cofactor.

It localises to the cytoplasm. The catalysed reaction is L-methionine + ATP + H2O = S-adenosyl-L-methionine + phosphate + diphosphate. Its pathway is amino-acid biosynthesis; S-adenosyl-L-methionine biosynthesis; S-adenosyl-L-methionine from L-methionine: step 1/1. Catalyzes the formation of S-adenosylmethionine (AdoMet) from methionine and ATP. The overall synthetic reaction is composed of two sequential steps, AdoMet formation and the subsequent tripolyphosphate hydrolysis which occurs prior to release of AdoMet from the enzyme. In Verminephrobacter eiseniae (strain EF01-2), this protein is S-adenosylmethionine synthase.